Reading from the N-terminus, the 799-residue chain is High affinity nerve growth factor receptor (799 aa).

The first 32 residues, 1-32 (MLRGQRHGQLGWHRPAAGLGGLVTSLMLACAC), serve as a signal peptide directing secretion. The Extracellular segment spans residues 33–418 (AASCRETCCP…DPVEKKDETP (386 aa)). Cystine bridges form between C36–C41 and C40–C50. The N-linked (GlcNAc...) asparagine glycan is linked to N67. LRR repeat units follow at residues 90–113 (LGELRSLTIVKSGLRFVAPDAFHF) and 116–137 (RLSHLNLSSNALESLSWKTVQG). N121, N190, N204, N255, N264, N320, N325, N341, N361, and N404 each carry an N-linked (GlcNAc...) asparagine glycan. In terms of domain architecture, LRRCT spans 148–219 (NPLHCSCALL…GDDVFLQCQV (72 aa)). C154 and C193 are oxidised to a cystine. 2 Ig-like C2-type domains span residues 196-285 (PSVK…VSVS) and 295-368 (AVEQ…LAAN). 2 cysteine pairs are disulfide-bonded: C217–C267 and C302–C348. The chain crosses the membrane as a helical span at residues 419-442 (FGVSVAVGLAVSAALFLSALLLVL). Over 443-799 (NKCGQRSKFG…APPSYLDVLG (357 aa)) the chain is Cytoplasmic. The interaction with SQSTM1 stretch occupies residues 472–493 (MTLGGSSLSPTEGKGSGLQGHI). Residue Y499 is modified to Phosphotyrosine; by autocatalysis. In terms of domain architecture, Protein kinase spans 513-784 (IILKWELGEG…LSMKDVHARL (272 aa)). ATP-binding positions include 519 to 527 (LGEGAFGKV) and K547. The active-site Proton acceptor is D653. Phosphotyrosine; by autocatalysis is present on residues Y679, Y683, Y684, and Y794.

Belongs to the protein kinase superfamily. Tyr protein kinase family. Insulin receptor subfamily. In terms of assembly, exists in a dynamic equilibrium between monomeric (low affinity) and dimeric (high affinity) structures. Homodimerization is induced by binding of a NGF dimer. Found in a complex, at least composed of KIDINS220, MAGI2, NTRK1 and RAPGEF2; the complex is mainly formed at late endosomes in a nerve growth factor (NGF)-dependent manner. Interacts with RAPGEF2; the interaction is strengthened after NGF stimulation. Interacts with SQSTM1; bridges NTRK1 to NGFR. Forms a ternary complex with NGFR and KIDINS220; this complex is affected by the expression levels of KIDINS220 and an increase in KIDINS220 expression leads to a decreased association of NGFR and NTRK1. Interacts (phosphorylated upon activation by NGF) with SHC1; mediates SHC1 phosphorylation and activation. Interacts (phosphorylated upon activation by NGF) with PLCG1; mediates PLCG1 phosphorylation and activation. Interacts (phosphorylated) with SH2B1 and SH2B2. Interacts with GRB2. Interacts with PIK3R1. Interacts with FRS2. Interacts with SORT1; may regulate NTRK1 anterograde axonal transport. Interacts with SH2D1A; regulates NTRK1. Interacts with NRADD. Interacts with RAB7A. Interacts with PTPRS. Interacts with USP36; USP36 does not deubiquitinate NTRK1. Interacts with GGA3. Interacts with TSPAN1; this interaction promotes NTRK1 stability. Ligand-mediated autophosphorylation. Interaction with SQSTM1 is phosphotyrosine-dependent. Autophosphorylation at Tyr-499 mediates interaction and phosphorylation of SHC1. In terms of processing, N-glycosylated. Post-translationally, ubiquitinated. Undergoes polyubiquitination upon activation; regulated by NGFR. Ubiquitination by NEDD4L leads to degradation. Ubiquitination regulates the internalization of the receptor. Isoform Trka-II is primarily expressed in neuronal cells; isoform Trka-I is found in non-neuronal tissues.

The protein resides in the cell membrane. It is found in the early endosome membrane. The protein localises to the late endosome membrane. Its subcellular location is the recycling endosome membrane. The enzyme catalyses L-tyrosyl-[protein] + ATP = O-phospho-L-tyrosyl-[protein] + ADP + H(+). Its activity is regulated as follows. The pro-survival signaling effect of NTRK1 in neurons requires its endocytosis into signaling early endosomes and its retrograde axonal transport. This is regulated by different proteins including CFL1, RAC1 and SORT1. NTF3 is unable to induce this signaling probably due to the lability of the NTF3-NTRK1 complex in endosomes. SH2D1A inhibits the autophosphorylation of the receptor, and alters the recruitment and activation of downstream effectors and signaling cascades. Regulated by NGFR. Receptor tyrosine kinase involved in the development and the maturation of the central and peripheral nervous systems through regulation of proliferation, differentiation and survival of sympathetic and nervous neurons. High affinity receptor for NGF which is its primary ligand. Can also bind and be activated by NTF3/neurotrophin-3. However, NTF3 only supports axonal extension through NTRK1 but has no effect on neuron survival. Upon dimeric NGF ligand-binding, undergoes homodimerization, autophosphorylation and activation. Recruits, phosphorylates and/or activates several downstream effectors including SHC1, FRS2, SH2B1, SH2B2 and PLCG1 that regulate distinct overlapping signaling cascades driving cell survival and differentiation. Through SHC1 and FRS2 activates a GRB2-Ras-MAPK cascade that regulates cell differentiation and survival. Through PLCG1 controls NF-Kappa-B activation and the transcription of genes involved in cell survival. Through SHC1 and SH2B1 controls a Ras-PI3 kinase-AKT1 signaling cascade that is also regulating survival. In absence of ligand and activation, may promote cell death, making the survival of neurons dependent on trophic factors. This is High affinity nerve growth factor receptor (Ntrk1) from Rattus norvegicus (Rat).